The following is a 629-amino-acid chain: Endoglucanase 15 (629 aa).

Residues Met-1–Gly-30 form the signal peptide. Asp-87 acts as the Nucleophile in catalysis. Residues His-421, Asp-473, and Glu-482 contribute to the active site. Asn-520, Asn-540, and Asn-561 each carry an N-linked (GlcNAc...) asparagine glycan.

It belongs to the glycosyl hydrolase 9 (cellulase E) family.

The protein resides in the secreted. The enzyme catalyses Endohydrolysis of (1-&gt;4)-beta-D-glucosidic linkages in cellulose, lichenin and cereal beta-D-glucans.. The sequence is that of Endoglucanase 15 from Oryza sativa subsp. japonica (Rice).